Here is a 285-residue protein sequence, read N- to C-terminus: 2-dehydro-3-deoxyphosphooctonate aldolase (285 aa).

Belongs to the KdsA family.

Its subcellular location is the cytoplasm. The enzyme catalyses D-arabinose 5-phosphate + phosphoenolpyruvate + H2O = 3-deoxy-alpha-D-manno-2-octulosonate-8-phosphate + phosphate. It participates in carbohydrate biosynthesis; 3-deoxy-D-manno-octulosonate biosynthesis; 3-deoxy-D-manno-octulosonate from D-ribulose 5-phosphate: step 2/3. It functions in the pathway bacterial outer membrane biogenesis; lipopolysaccharide biosynthesis. The polypeptide is 2-dehydro-3-deoxyphosphooctonate aldolase (Paracidovorax citrulli (strain AAC00-1) (Acidovorax citrulli)).